The following is a 473-amino-acid chain: Photosystem II CP43 reaction center protein (473 aa).

Positions 1 to 14 (MKTLYSLRRFSHVE) are excised as a propeptide. Threonine 15 is subject to N-acetylthreonine. Threonine 15 carries the phosphothreonine modification. Helical transmembrane passes span 69–93 (LFEV…PHLA), 134–155 (LLGP…KDRN), 178–200 (KALY…RKIT), 255–275 (KPFA…LSYS), and 291–312 (WFNN…ASQA). [CaMn4O5] cluster is bound at residue glutamate 367. A helical membrane pass occupies residues 447 to 471 (RARAAAAGFEKGIDRDFEPVLSMTP).

It belongs to the PsbB/PsbC family. PsbC subfamily. As to quaternary structure, PSII is composed of 1 copy each of membrane proteins PsbA, PsbB, PsbC, PsbD, PsbE, PsbF, PsbH, PsbI, PsbJ, PsbK, PsbL, PsbM, PsbT, PsbX, PsbY, PsbZ, Psb30/Ycf12, at least 3 peripheral proteins of the oxygen-evolving complex and a large number of cofactors. It forms dimeric complexes. Binds multiple chlorophylls and provides some of the ligands for the Ca-4Mn-5O cluster of the oxygen-evolving complex. It may also provide a ligand for a Cl- that is required for oxygen evolution. PSII binds additional chlorophylls, carotenoids and specific lipids. is required as a cofactor.

The protein localises to the plastid membrane. In terms of biological role, one of the components of the core complex of photosystem II (PSII). It binds chlorophyll and helps catalyze the primary light-induced photochemical processes of PSII. PSII is a light-driven water:plastoquinone oxidoreductase, using light energy to abstract electrons from H(2)O, generating O(2) and a proton gradient subsequently used for ATP formation. This Cuscuta obtusiflora (Peruvian dodder) protein is Photosystem II CP43 reaction center protein.